Reading from the N-terminus, the 282-residue chain is Pantothenate synthetase (282 aa).

30 to 37 (MGNLHEGH) is an ATP binding site. H37 (proton donor) is an active-site residue. Q61 contributes to the (R)-pantoate binding site. Q61 is a binding site for beta-alanine. 148–151 (GQKD) contributes to the ATP binding site. Residue Q154 participates in (R)-pantoate binding. Residues V177 and 185 to 188 (LSSR) contribute to the ATP site.

Belongs to the pantothenate synthetase family. Homodimer.

The protein resides in the cytoplasm. It catalyses the reaction (R)-pantoate + beta-alanine + ATP = (R)-pantothenate + AMP + diphosphate + H(+). It participates in cofactor biosynthesis; (R)-pantothenate biosynthesis; (R)-pantothenate from (R)-pantoate and beta-alanine: step 1/1. Catalyzes the condensation of pantoate with beta-alanine in an ATP-dependent reaction via a pantoyl-adenylate intermediate. The sequence is that of Pantothenate synthetase from Acinetobacter baumannii (strain AB0057).